We begin with the raw amino-acid sequence, 359 residues long: Outer membrane protein P2 (359 aa).

An N-terminal signal peptide occupies residues 1–20 (MKKTLAALIVGAFAASAANA).

It belongs to the Gram-negative porin family. As to quaternary structure, homotrimer.

It localises to the cell outer membrane. Its function is as follows. Forms pores that allow passive diffusion of small molecules across the outer membrane. This is Outer membrane protein P2 (ompP2) from Haemophilus influenzae (strain ATCC 51907 / DSM 11121 / KW20 / Rd).